The chain runs to 547 residues: Chaperonin GroEL 2 (547 aa).

Residues 30–33 (TLGP), lysine 51, 87–91 (DGTTT), glycine 415, 479–481 (NAA), and aspartate 495 each bind ATP. The tract at residues 528 to 547 (KPATAGLPHGGPGGFGGPEF) is disordered. A compositionally biased stretch (gly residues) spans 535-547 (PHGGPGGFGGPEF).

This sequence belongs to the chaperonin (HSP60) family. In terms of assembly, forms a cylinder of 14 subunits composed of two heptameric rings stacked back-to-back. Interacts with the co-chaperonin GroES.

It is found in the cytoplasm. The enzyme catalyses ATP + H2O + a folded polypeptide = ADP + phosphate + an unfolded polypeptide.. Together with its co-chaperonin GroES, plays an essential role in assisting protein folding. The GroEL-GroES system forms a nano-cage that allows encapsulation of the non-native substrate proteins and provides a physical environment optimized to promote and accelerate protein folding. This is Chaperonin GroEL 2 from Azoarcus sp. (strain BH72).